The following is a 134-amino-acid chain: Protein PsiB (134 aa).

Its function is as follows. Could be involved directly or indirectly in exopolysaccharide synthesis. This Rhizobium leguminosarum bv. phaseoli protein is Protein PsiB (psiB).